A 336-amino-acid polypeptide reads, in one-letter code: Malate dehydrogenase, cytoplasmic (336 aa).

Residues 11–17 and D42 each bind NAD(+); that span reads GAAGQIG. Substrate contacts are provided by R92 and R98. NAD(+) contacts are provided by residues N105, Q112, and 129–131; that span reads VGN. 2 residues coordinate substrate: N131 and R163. H188 acts as the Proton acceptor in catalysis.

Belongs to the LDH/MDH superfamily. MDH type 2 family. As to quaternary structure, homodimer.

It localises to the cytoplasm. It carries out the reaction (S)-malate + NAD(+) = oxaloacetate + NADH + H(+). Its function is as follows. Catalyzes the reversible conversion of (S)-malate to oxaloacetate in the cytoplasm where oxaloacetate is used for gluconeogenesis. The protein is Malate dehydrogenase, cytoplasmic of Caenorhabditis elegans.